Reading from the N-terminus, the 608-residue chain is Chaperone protein HtpG (608 aa).

Residues 1–332 form an a; substrate-binding region; that stretch reads MQFQTEVNQL…VEDLPLNVSR (332 aa). The b stretch occupies residues 333-536; it reads EILQENQILK…KNKLDFAMQQ (204 aa). The interval 537 to 608 is c; it reads LLKQMGQEQN…LTKIINKAFS (72 aa).

Belongs to the heat shock protein 90 family. As to quaternary structure, homodimer.

It localises to the cytoplasm. Its function is as follows. Molecular chaperone. Has ATPase activity. This Campylobacter jejuni subsp. doylei (strain ATCC BAA-1458 / RM4099 / 269.97) protein is Chaperone protein HtpG.